The following is a 396-amino-acid chain: Homoserine O-acetyltransferase (396 aa).

Residues 53-370 enclose the AB hydrolase-1 domain; sequence NAILVCHALT…DRGHDAFLLE (318 aa). Ser-158 serves as the catalytic Nucleophile. Arg-228 contacts substrate. Catalysis depends on residues Asp-331 and His-364. Asp-365 is a substrate binding site.

Belongs to the AB hydrolase superfamily. MetX family. In terms of assembly, homodimer.

The protein resides in the cytoplasm. It carries out the reaction L-homoserine + acetyl-CoA = O-acetyl-L-homoserine + CoA. The protein operates within amino-acid biosynthesis; L-methionine biosynthesis via de novo pathway; O-acetyl-L-homoserine from L-homoserine: step 1/1. In terms of biological role, transfers an acetyl group from acetyl-CoA to L-homoserine, forming acetyl-L-homoserine. The sequence is that of Homoserine O-acetyltransferase from Gluconobacter oxydans (strain 621H) (Gluconobacter suboxydans).